We begin with the raw amino-acid sequence, 270 residues long: Tetraspanin-17 (270 aa).

The Cytoplasmic segment spans residues 1 to 19 (MPGKHQHFQEPEVGCCGKY). Residues 20–40 (FLFGFNIVFWVLGALFLAIGL) traverse the membrane as a helical segment. Over 41-63 (WAWGEKGVLSNISALTDLGGLDP) the chain is Extracellular. Residue N51 is glycosylated (N-linked (GlcNAc...) asparagine). A helical membrane pass occupies residues 64 to 84 (VWLFVVVGGVMSVLGFAGCIG). The Cytoplasmic segment spans residues 85–94 (ALRENTFLLK). A helical transmembrane segment spans residues 95 to 115 (FFSVFLGLIFFLELATGILAF). The Extracellular portion of the chain corresponds to 116–234 (VFKDWIRDQL…GQFEKWLQDN (119 aa)). Disulfide bonds link C155/C223, C156/C188, C172/C182, and C189/C202. N171 carries N-linked (GlcNAc...) asparagine glycosylation. Residues 235-255 (LIVVAGVFMGIALLQIFGICL) form a helical membrane-spanning segment. Over 256–270 (AQNLVSDIKAVKANW) the chain is Cytoplasmic.

This sequence belongs to the tetraspanin (TM4SF) family. In terms of assembly, interacts with ADAM10; the interaction influences ADAM10 substrate specificity, endocytosis and turnover.

The protein localises to the cell membrane. Part of TspanC8 subgroup, composed of 6 members that interact with the transmembrane metalloprotease ADAM10. This interaction is required for ADAM10 exit from the endoplasmic reticulum and for enzymatic maturation and trafficking to the cell surface as well as substrate specificity. Different TspanC8/ADAM10 complexes have distinct substrates. Seems to regulate VE-cadherin expression in endothelial cells probably through interaction with ADAM10, promoting leukocyte transmigration. This chain is Tetraspanin-17, found in Homo sapiens (Human).